Reading from the N-terminus, the 92-residue chain is Small ribosomal subunit protein uS19c (92 aa).

It belongs to the universal ribosomal protein uS19 family.

The protein resides in the plastid. It is found in the chloroplast. Protein S19 forms a complex with S13 that binds strongly to the 16S ribosomal RNA. The chain is Small ribosomal subunit protein uS19c from Lemna minor (Common duckweed).